The primary structure comprises 196 residues: Probable malonic semialdehyde reductase RutE (196 aa).

Belongs to the nitroreductase family. HadB/RutE subfamily. Requires FMN as cofactor.

It carries out the reaction 3-hydroxypropanoate + NADP(+) = 3-oxopropanoate + NADPH + H(+). In terms of biological role, may reduce toxic product malonic semialdehyde to 3-hydroxypropionic acid, which is excreted. This Escherichia coli O7:K1 (strain IAI39 / ExPEC) protein is Probable malonic semialdehyde reductase RutE.